The primary structure comprises 205 residues: MFIVIEGIDGAGKSTQARLLAEWFKKKGYDVVLTKEPTDTAFGKLIRRLVLTGGKEGIIDGARISHEAEALLFAADRAEHVHKLIKPSLKTGKIVISDRYFYSSLAYQWARGLDLEWLIDLNRFAVRPDLVILLDLPVKESMKRINGRSIKTEFDKIAELQKKVRENYLKLAERFPEMRIVNALASVEDIHNDIVALVEHELLKR.

7–14 (GIDGAGKS) lines the ATP pocket.

The protein belongs to the thymidylate kinase family.

It catalyses the reaction dTMP + ATP = dTDP + ADP. This chain is Probable thymidylate kinase, found in Thermococcus onnurineus (strain NA1).